We begin with the raw amino-acid sequence, 526 residues long: Nucleobase-ascorbate transporter 4 (526 aa).

12 consecutive transmembrane segments (helical) span residues 42-62 (IVML…MGGG), 69-89 (VINT…LFGS), 91-111 (LPVV…ITFS), 131-151 (IQGA…FGLW), 157-177 (FLSP…LLAF), 186-206 (IEIG…LPHL), 217-237 (FAVL…TAAG), 282-302 (AFAM…SFIA), 359-381 (RVVQ…GAVL), 388-410 (IFAA…LLQF), 420-440 (FILG…TEYL), and 457-477 (VIMQ…AFLL).

This sequence belongs to the nucleobase:cation symporter-2 (NCS2) (TC 2.A.40) family. In terms of tissue distribution, highly expressed in the root central cylinder. Expressed in the filaments and stigmatic papillae of pollinated flowers and developing siliques.

The protein localises to the membrane. The protein is Nucleobase-ascorbate transporter 4 (NAT4) of Arabidopsis thaliana (Mouse-ear cress).